The sequence spans 78 residues: Cytochrome c oxidase subunit 6b-3 (78 aa).

Residues 22–65 (TRHCFTRYIEFHRCTTAKGEDANECERFAKYYRALCPGEWVDKW) enclose the CHCH domain. A Cx9C motif motif is present at residues 25 to 35 (CFTRYIEFHRC). 2 cysteine pairs are disulfide-bonded: cysteine 25-cysteine 57 and cysteine 35-cysteine 46. The short motif at 46-57 (CERFAKYYRALC) is the Cx10C motif element.

The protein belongs to the cytochrome c oxidase subunit 6B (TC 3.D.4.8) family. As to expression, expressed in the whole plant.

It is found in the mitochondrion. This protein is one of the nuclear-coded polypeptide chains of cytochrome c oxidase, the terminal oxidase in mitochondrial electron transport. This protein may be one of the heme-binding subunits of the oxidase. The chain is Cytochrome c oxidase subunit 6b-3 (COX6B-3) from Arabidopsis thaliana (Mouse-ear cress).